The sequence spans 325 residues: DNA repair and recombination protein RadA (325 aa).

107 to 114 (GEFGSGKT) serves as a coordination point for ATP.

This sequence belongs to the eukaryotic RecA-like protein family.

Its function is as follows. Involved in DNA repair and in homologous recombination. Binds and assemble on single-stranded DNA to form a nucleoprotein filament. Hydrolyzes ATP in a ssDNA-dependent manner and promotes DNA strand exchange between homologous DNA molecules. The chain is DNA repair and recombination protein RadA from Methanococcoides burtonii (strain DSM 6242 / NBRC 107633 / OCM 468 / ACE-M).